The following is a 233-amino-acid chain: 2,3,4,5-tetrahydropyridine-2,6-dicarboxylate N-acetyltransferase (233 aa).

The protein belongs to the transferase hexapeptide repeat family. DapH subfamily.

The catalysed reaction is (S)-2,3,4,5-tetrahydrodipicolinate + acetyl-CoA + H2O = L-2-acetamido-6-oxoheptanedioate + CoA. Its pathway is amino-acid biosynthesis; L-lysine biosynthesis via DAP pathway; LL-2,6-diaminopimelate from (S)-tetrahydrodipicolinate (acetylase route): step 1/3. Its function is as follows. Catalyzes the transfer of an acetyl group from acetyl-CoA to tetrahydrodipicolinate. The protein is 2,3,4,5-tetrahydropyridine-2,6-dicarboxylate N-acetyltransferase of Leuconostoc mesenteroides subsp. mesenteroides (strain ATCC 8293 / DSM 20343 / BCRC 11652 / CCM 1803 / JCM 6124 / NCDO 523 / NBRC 100496 / NCIMB 8023 / NCTC 12954 / NRRL B-1118 / 37Y).